A 364-amino-acid chain; its full sequence is Aminomethyltransferase (364 aa).

It belongs to the GcvT family. As to quaternary structure, the glycine cleavage system is composed of four proteins: P, T, L and H.

The enzyme catalyses N(6)-[(R)-S(8)-aminomethyldihydrolipoyl]-L-lysyl-[protein] + (6S)-5,6,7,8-tetrahydrofolate = N(6)-[(R)-dihydrolipoyl]-L-lysyl-[protein] + (6R)-5,10-methylene-5,6,7,8-tetrahydrofolate + NH4(+). Its function is as follows. The glycine cleavage system catalyzes the degradation of glycine. The sequence is that of Aminomethyltransferase from Shewanella piezotolerans (strain WP3 / JCM 13877).